Here is a 324-residue protein sequence, read N- to C-terminus: Beta-ketoacyl-[acyl-carrier-protein] synthase III (324 aa).

Catalysis depends on residues cysteine 112 and histidine 251. The interval 252–256 is ACP-binding; the sequence is QANLR. Asparagine 281 is a catalytic residue.

It belongs to the thiolase-like superfamily. FabH family. In terms of assembly, homodimer.

It localises to the cytoplasm. It carries out the reaction malonyl-[ACP] + acetyl-CoA + H(+) = 3-oxobutanoyl-[ACP] + CO2 + CoA. It functions in the pathway lipid metabolism; fatty acid biosynthesis. In terms of biological role, catalyzes the condensation reaction of fatty acid synthesis by the addition to an acyl acceptor of two carbons from malonyl-ACP. Catalyzes the first condensation reaction which initiates fatty acid synthesis and may therefore play a role in governing the total rate of fatty acid production. Possesses both acetoacetyl-ACP synthase and acetyl transacylase activities. Its substrate specificity determines the biosynthesis of branched-chain and/or straight-chain of fatty acids. In Clostridium perfringens (strain ATCC 13124 / DSM 756 / JCM 1290 / NCIMB 6125 / NCTC 8237 / Type A), this protein is Beta-ketoacyl-[acyl-carrier-protein] synthase III.